A 493-amino-acid polypeptide reads, in one-letter code: ATP synthase subunit beta, chloroplastic (493 aa).

170-177 contributes to the ATP binding site; the sequence is GGAGVGKT.

This sequence belongs to the ATPase alpha/beta chains family. As to quaternary structure, F-type ATPases have 2 components, CF(1) - the catalytic core - and CF(0) - the membrane proton channel. CF(1) has five subunits: alpha(3), beta(3), gamma(1), delta(1), epsilon(1). CF(0) has four main subunits: a(1), b(1), b'(1) and c(9-12).

It localises to the plastid. The protein resides in the chloroplast thylakoid membrane. The enzyme catalyses ATP + H2O + 4 H(+)(in) = ADP + phosphate + 5 H(+)(out). In terms of biological role, produces ATP from ADP in the presence of a proton gradient across the membrane. The catalytic sites are hosted primarily by the beta subunits. The protein is ATP synthase subunit beta, chloroplastic of Chaetosphaeridium globosum (Charophycean green alga).